A 302-amino-acid chain; its full sequence is Glutamate/aspartate import solute-binding protein (302 aa).

Positions 1-22 (MQLRKPATAILALALSAGLAQA) are cleaved as a signal peptide.

It belongs to the bacterial solute-binding protein 3 family. As to quaternary structure, the complex is composed of two ATP-binding proteins (GltL), two transmembrane proteins (GltJ and GltK) and a solute-binding protein (GltI).

Its subcellular location is the periplasm. Part of the ABC transporter complex GltIJKL involved in glutamate and aspartate uptake. Binds to both glutamate and aspartate. The chain is Glutamate/aspartate import solute-binding protein (gltI) from Escherichia coli (strain K12).